Reading from the N-terminus, the 105-residue chain is Nucleoid-associated protein RPC_4847 (105 aa).

The protein belongs to the YbaB/EbfC family. In terms of assembly, homodimer.

Its subcellular location is the cytoplasm. The protein resides in the nucleoid. Its function is as follows. Binds to DNA and alters its conformation. May be involved in regulation of gene expression, nucleoid organization and DNA protection. The sequence is that of Nucleoid-associated protein RPC_4847 from Rhodopseudomonas palustris (strain BisB18).